The primary structure comprises 69 residues: Conotoxin Lt5.7 (69 aa).

The first 19 residues, 1–19 (MLCLPVFIILLLLASPAAP), serve as a signal peptide directing secretion. Positions 20–54 (KSLETRIQNDLIRAGLTDADLKTEKGFLSGLLNVA) are excised as a propeptide.

This sequence belongs to the conotoxin T superfamily. Contains 2 disulfide bonds that can be either 'C1-C3, C2-C4' or 'C1-C4, C2-C3', since these disulfide connectivities have been observed for conotoxins with cysteine framework V (for examples, see AC P0DQQ7 and AC P81755). In terms of tissue distribution, expressed by the venom duct.

The protein resides in the secreted. The chain is Conotoxin Lt5.7 from Conus litteratus (Lettered cone).